Here is a 397-residue protein sequence, read N- to C-terminus: Phosphoglycerate kinase (397 aa).

Substrate is bound by residues 26–28 (DLN), Arg-42, 65–68 (HLGR), Arg-119, and Arg-152. ATP contacts are provided by residues Lys-203, Glu-325, and 351–354 (GGDT).

This sequence belongs to the phosphoglycerate kinase family. In terms of assembly, monomer.

Its subcellular location is the cytoplasm. The enzyme catalyses (2R)-3-phosphoglycerate + ATP = (2R)-3-phospho-glyceroyl phosphate + ADP. It participates in carbohydrate degradation; glycolysis; pyruvate from D-glyceraldehyde 3-phosphate: step 2/5. The protein is Phosphoglycerate kinase of Bordetella pertussis (strain Tohama I / ATCC BAA-589 / NCTC 13251).